A 213-amino-acid chain; its full sequence is tRNA (guanine-N(7)-)-methyltransferase (213 aa).

S-adenosyl-L-methionine-binding residues include E44, E69, D96, and D118. D118 is an active-site residue. A substrate-binding site is contributed by K122. An interaction with RNA region spans residues R124–R129. Residues D154 and T191 to E194 contribute to the substrate site.

The protein belongs to the class I-like SAM-binding methyltransferase superfamily. TrmB family. In terms of assembly, homodimer.

It carries out the reaction guanosine(46) in tRNA + S-adenosyl-L-methionine = N(7)-methylguanosine(46) in tRNA + S-adenosyl-L-homocysteine. Its pathway is tRNA modification; N(7)-methylguanine-tRNA biosynthesis. Catalyzes the formation of N(7)-methylguanine at position 46 (m7G46) in tRNA. This Bacillus subtilis (strain 168) protein is tRNA (guanine-N(7)-)-methyltransferase.